The chain runs to 598 residues: F-box/WD repeat-containing protein 8 (598 aa).

Methionine 1 carries the post-translational modification N-acetylmethionine. Residues 20 to 97 form a disordered region; it reads SQALRRRRRL…PDRDATEPEP (78 aa). The segment covering 29–44 has biased composition (basic and acidic residues); it reads LEAGERRSPRRPEAGA. Residues 51–65 show a composition bias toward low complexity; it reads GYLGLAQGLLEGAGR. A compositionally biased stretch (basic and acidic residues) spans 73 to 93; that stretch reads RGGDRKDTSSRSRSPPDRDAT. Serine 84 is modified (phosphoserine). The residue at position 86 (serine 86) is a Phosphoserine; by MTOR. The 47-residue stretch at 113–159 folds into the F-box domain; it reads PFFDVRLPYELAINIFQYLNRRELGLCAQVSKTWKVIAEDEVLWYRL. WD repeat units follow at residues 201-250, 259-299, 300-340, 341-383, 384-429, 430-475, 476-513, and 514-561; these read AVSE…LESE, QPYV…FEHD, ARIQ…SEFE, VQKL…LHYV, YGQP…SKLG, NALG…SAHQ, LGVS…EVHS, and RHPV…AYEF.

Component of the Cul7-RING(FBXW8) complex consisting of CUL7, RBX1, SKP1 and FBXW8; within the complex interacts with CUL7 and SKP1. Interacts with GLMN isoform 1. Interacts with OBSL1, CUL1, CUL2, CCT6B, PFDN5, CCT2, CCT3, CCT6A, CCT7, VBP1, CCDC8, ARF1, TRIP13, PDCD5 and GORASP1. Interacts with MAP4K1/HPK1 (when autophosphorylated). Associated component of the 3M complex. Interacts with POUF51 (when phosphorylated on 'Ser-347'). Post-translationally, phosphorylation at Ser-86 by mTORC2 promotes FBXW8 stabilization, allowing its translocation to the cytosol in response to insulin. Widely expressed. Expressed at higher level in skeletal muscle, cartilage and lung.

Its subcellular location is the cytoplasm. The protein localises to the perinuclear region. The protein resides in the golgi apparatus. It localises to the cytosol. Its pathway is protein modification; protein ubiquitination. Its function is as follows. Substrate-recognition component of the Cul7-RING(FBXW8) ubiquitin ligase complex, which mediates the ubiquitination and subsequent proteasomal degradation of target proteins. The Cul7-RING(FBXW8) complex mediates ubiquitination and consequent degradation of GORASP1, acting as a component of the ubiquitin ligase pathway that regulates Golgi morphogenesis and dendrite patterning in brain. Mediates ubiquitination and degradation of IRS1 in a mTOR-dependent manner: the Cul7-RING(FBXW8) complex recognizes and binds IRS1 previously phosphorylated by S6 kinase (RPS6KB1 or RPS6KB2). The Cul7-RING(FBXW8) complex also mediates ubiquitination of MAP4K1/HPK1: recognizes and binds autophosphorylated MAP4K1/HPK1, leading to its degradation, thereby affecting cell proliferation and differentiation. The Cul7-RING(FBXW8) complex also mediates ubiquitination of phosphorylated cyclin-D1 (CCND1). The Cul7-RING(FBXW8) complex is however not a major regulator of CCND1 stability during the G1/S transition. Associated component of the 3M complex, suggesting that it mediates some of 3M complex functions. This is F-box/WD repeat-containing protein 8 (Fbxw8) from Mus musculus (Mouse).